The primary structure comprises 347 residues: Fc receptor-like A (347 aa).

The signal sequence occupies residues 1–27; that stretch reads MKLSCMLIEWALYVCPAVLLATQMSLA. 2 Ig-like C2-type domains span residues 77-166 and 179-257; these read PFHL…ETAS and PVLK…RQIS. 2 disulfide bridges follow: cysteine 106/cysteine 150 and cysteine 199/cysteine 247. The segment at 272–296 is disordered; it reads KPATPETPPPAKAPGPLPLLPTPSD. Residues 276–292 show a composition bias toward pro residues; it reads PETPPPAKAPGPLPLLP.

In terms of assembly, monomer or homodimer; disulfide-linked.

The protein localises to the cytoplasm. Functionally, may be implicated in B-cell differentiation and lymphomagenesis. This chain is Fc receptor-like A (Fcrla), found in Rattus norvegicus (Rat).